Here is a 440-residue protein sequence, read N- to C-terminus: Protein CANDIDATE G-PROTEIN COUPLED RECEPTOR 7 (440 aa).

Residues 1-24 form the signal peptide; it reads MAKMPLSVVVFLLFSAAFLAVSMA. N-linked (GlcNAc...) asparagine glycosylation is found at Asn-124 and Asn-162. Transmembrane regions (helical) follow at residues 175–195, 207–227, 243–263, 281–301, and 315–335; these read LPTL…FWSY, IHLL…CAAE, ILFY…IILI, VLII…VIGE, and VFLL…VWSI. A glycan (N-linked (GlcNAc...) asparagine) is linked at Asn-351. 2 helical membrane-spanning segments follow: residues 363–383 and 390–410; these read IVVI…KTIA and VSFA…FHMF.

Belongs to the LU7TM family.

It localises to the membrane. Functionally, plays a role in plants and microbes interactions. G-protein coupled receptor involved in root growth mediated by the bacterial quorum-sensing signals N-acyl-homoserine lactones (AHLs). The protein is Protein CANDIDATE G-PROTEIN COUPLED RECEPTOR 7 of Arabidopsis thaliana (Mouse-ear cress).